Reading from the N-terminus, the 514-residue chain is Type-2 serine--tRNA ligase (514 aa).

L-serine is bound at residue Ala-313. Cys-315 provides a ligand contact to Zn(2+). Arg-344 is a binding site for L-serine. Residues 344–346 (RWE) and 355–356 (RV) each bind ATP. 361 to 363 (RGE) contributes to the L-serine binding site. Zn(2+)-binding residues include Glu-363 and Cys-470. Residue Arg-477 coordinates ATP.

It belongs to the class-II aminoacyl-tRNA synthetase family. Type-2 seryl-tRNA synthetase subfamily. As to quaternary structure, homodimer. The cofactor is Zn(2+).

It is found in the cytoplasm. It carries out the reaction tRNA(Ser) + L-serine + ATP = L-seryl-tRNA(Ser) + AMP + diphosphate + H(+). The catalysed reaction is tRNA(Sec) + L-serine + ATP = L-seryl-tRNA(Sec) + AMP + diphosphate + H(+). It functions in the pathway aminoacyl-tRNA biosynthesis; selenocysteinyl-tRNA(Sec) biosynthesis; L-seryl-tRNA(Sec) from L-serine and tRNA(Sec): step 1/1. Catalyzes the attachment of serine to tRNA(Ser). Is also able to aminoacylate tRNA(Sec) with serine, to form the misacylated tRNA L-seryl-tRNA(Sec), which will be further converted into selenocysteinyl-tRNA(Sec). The chain is Type-2 serine--tRNA ligase from Methanococcus maripaludis (strain C7 / ATCC BAA-1331).